We begin with the raw amino-acid sequence, 730 residues long: Synaptotagmin-like protein 5 (730 aa).

The region spanning 7 to 123 (FINLSFLLDH…IITGEWFFEE (117 aa)) is the RabBD domain. The FYVE-type zinc-finger motif lies at 64–106 (CVHCHRNLGLIFDRGDPCQACSLRVCRECRVAGPNGSWKCTVC). S147 carries the post-translational modification Phosphoserine. Disordered stretches follow at residues 147 to 188 (SPGA…GFLL), 217 to 271 (QHFR…TRTV), and 294 to 355 (SQEL…LDKD). Polar residues-rich tracts occupy residues 248–271 (PKSSRSNGVTPGTQSSPAPSTRTV) and 305–322 (TSGTPSIAVSGTSLSSDQ). C2 domains are found at residues 406-527 (VSGE…DEWF) and 563-694 (PPEQ…VDWM).

As to quaternary structure, binds RAB27A that has been activated by GTP-binding, and possibly also RAB3A and RAB6A. Highly expressed in placenta and liver.

The protein resides in the membrane. Its function is as follows. May act as Rab effector protein and play a role in vesicle trafficking. Binds phospholipids. This is Synaptotagmin-like protein 5 (SYTL5) from Homo sapiens (Human).